A 1088-amino-acid polypeptide reads, in one-letter code: DNA damage-binding protein 1b (1088 aa).

Belongs to the DDB1 family. As to quaternary structure, interacts with DDA1. Binds to KTN80.2/DWA3. Interacts with HTD1.

It is found in the nucleus. It participates in protein modification; protein ubiquitination. Functionally, component of light signal transduction machinery. Involved in repression of photomorphogenesis in darkness. Plays a role in DNA repair by forming with DDB2 the UV-damaged DNA-binding protein complex (UV-DDB). In Arabidopsis thaliana (Mouse-ear cress), this protein is DNA damage-binding protein 1b.